The following is an 89-amino-acid chain: MAHKKAGGSSRNGRDSAGRRLGVKKFGGQEVVGGNIIIRQRGTRVYPGANVGMGKDHTLFALAEGRVRFHAGKLGRKYVSVDMMAEAAE.

The tract at residues 1-21 (MAHKKAGGSSRNGRDSAGRRL) is disordered.

Belongs to the bacterial ribosomal protein bL27 family.

The protein is Large ribosomal subunit protein bL27 of Novosphingobium aromaticivorans (strain ATCC 700278 / DSM 12444 / CCUG 56034 / CIP 105152 / NBRC 16084 / F199).